Consider the following 439-residue polypeptide: Putative phosphatidate cytidylyltransferase (439 aa).

The disordered stretch occupies residues 1-37; sequence MARKRTNKRNNSDKENGNVGVVQNKDSASSKTTEPAR. Ser12 is subject to Phosphoserine. Residues 24–33 show a composition bias toward polar residues; it reads NKDSASSKTT. A run of 7 helical transmembrane segments spans residues 52 to 71, 76 to 98, 110 to 130, 145 to 165, 180 to 199, 245 to 265, and 321 to 341; these read FITR…TALA, WVVL…IASV, FINW…SIYA, LVLH…VLFV, FCWT…FMIN, GFLG…YVLM, and FHLA…GFFA.

It belongs to the CDS family. Mg(2+) is required as a cofactor.

It is found in the endoplasmic reticulum membrane. The enzyme catalyses a 1,2-diacyl-sn-glycero-3-phosphate + CTP + H(+) = a CDP-1,2-diacyl-sn-glycerol + diphosphate. It functions in the pathway phospholipid metabolism; CDP-diacylglycerol biosynthesis; CDP-diacylglycerol from sn-glycerol 3-phosphate: step 3/3. Functionally, supplies CDP-diacylglycerol, which may play an important role as both a precursor to phosphoinositide biosynthesis in the plasma membrane and as a negative effector of phosphatidylinositol 4-kinase activity, thereby exerting an effect on cell proliferation via a lipid-dependent signal transduction cascade. In Schizosaccharomyces pombe (strain 972 / ATCC 24843) (Fission yeast), this protein is Putative phosphatidate cytidylyltransferase.